A 469-amino-acid chain; its full sequence is DNA-binding transcriptional regulator NtrC (469 aa).

The 115-residue stretch at 5–119 (IVWVVDDDSS…EAVALVERAI (115 aa)) folds into the Response regulatory domain. D54 is modified (4-aspartylphosphate). Positions 140-369 (IIGEAPAMQD…LENTCRWLTV (230 aa)) constitute a Sigma-54 factor interaction domain. ATP contacts are provided by residues 168–175 (GESGTGKE) and 231–240 (ADGGTLFLDE). The H-T-H motif DNA-binding region spans 445 to 464 (KQEAARLLGWGRNTLTRKLK).

Post-translationally, phosphorylated and dephosphorylated by NtrB.

It is found in the cytoplasm. Its function is as follows. Member of the two-component regulatory system NtrB/NtrC, which controls expression of the nitrogen-regulated (ntr) genes in response to nitrogen limitation. Phosphorylated NtrC binds directly to DNA and stimulates the formation of open promoter-sigma54-RNA polymerase complexes. The polypeptide is DNA-binding transcriptional regulator NtrC (glnG) (Escherichia coli O157:H7).